The primary structure comprises 218 residues: Small ribosomal subunit protein uS5 (218 aa).

The span at methionine 1–glycine 10 shows a compositional bias: polar residues. A disordered region spans residues methionine 1–glutamine 63. The span at glutamine 11–glycine 25 shows a compositional bias: low complexity. Over residues glycine 31–glutamine 63 the composition is skewed to basic and acidic residues. Residues tryptophan 62 to valine 125 form the S5 DRBM domain.

Belongs to the universal ribosomal protein uS5 family. In terms of assembly, part of the 30S ribosomal subunit. Contacts proteins S4 and S8.

Its function is as follows. With S4 and S12 plays an important role in translational accuracy. Functionally, located at the back of the 30S subunit body where it stabilizes the conformation of the head with respect to the body. In Synechococcus sp. (strain RCC307), this protein is Small ribosomal subunit protein uS5.